The chain runs to 197 residues: Holliday junction branch migration complex subunit RuvA (197 aa).

The domain I stretch occupies residues 1–64; it reads MIGHLEGRLR…EDAIQLYGFR (64 aa). Residues 65 to 143 are domain II; it reads TVAEKDMFLR…VKKGREAEQP (79 aa). Residues 144 to 145 are flexible linker; that stretch reads AP. Residues 146–197 form a domain III region; the sequence is AAESSYGDAYSALVNLGYRPAEAEKALGKAIKSLGADPPVEKLLKETLRLLA.

The protein belongs to the RuvA family. Homotetramer. Forms an RuvA(8)-RuvB(12)-Holliday junction (HJ) complex. HJ DNA is sandwiched between 2 RuvA tetramers; dsDNA enters through RuvA and exits via RuvB. An RuvB hexamer assembles on each DNA strand where it exits the tetramer. Each RuvB hexamer is contacted by two RuvA subunits (via domain III) on 2 adjacent RuvB subunits; this complex drives branch migration. In the full resolvosome a probable DNA-RuvA(4)-RuvB(12)-RuvC(2) complex forms which resolves the HJ.

The protein localises to the cytoplasm. In terms of biological role, the RuvA-RuvB-RuvC complex processes Holliday junction (HJ) DNA during genetic recombination and DNA repair, while the RuvA-RuvB complex plays an important role in the rescue of blocked DNA replication forks via replication fork reversal (RFR). RuvA specifically binds to HJ cruciform DNA, conferring on it an open structure. The RuvB hexamer acts as an ATP-dependent pump, pulling dsDNA into and through the RuvAB complex. HJ branch migration allows RuvC to scan DNA until it finds its consensus sequence, where it cleaves and resolves the cruciform DNA. In Syntrophobacter fumaroxidans (strain DSM 10017 / MPOB), this protein is Holliday junction branch migration complex subunit RuvA.